We begin with the raw amino-acid sequence, 333 residues long: Fructose-1,6-bisphosphatase class 1 1 (333 aa).

The Mg(2+) site is built by Glu81, Asp100, Leu102, and Asp103. Substrate-binding positions include 103–106 (DGSS) and Asn191. Glu263 contributes to the Mg(2+) binding site.

It belongs to the FBPase class 1 family. As to quaternary structure, homotetramer. Requires Mg(2+) as cofactor.

It is found in the cytoplasm. It carries out the reaction beta-D-fructose 1,6-bisphosphate + H2O = beta-D-fructose 6-phosphate + phosphate. It participates in carbohydrate biosynthesis; gluconeogenesis. Its activity is regulated as follows. Fructose-1,6-bisphosphatase II is not light-activated. The chain is Fructose-1,6-bisphosphatase class 1 1 from Cereibacter sphaeroides (Rhodobacter sphaeroides).